The chain runs to 400 residues: 1-deoxy-D-xylulose 5-phosphate reductoisomerase (400 aa).

Threonine 10, glycine 11, serine 12, isoleucine 13, glycine 36, asparagine 38, and asparagine 124 together coordinate NADPH. Lysine 125 contributes to the 1-deoxy-D-xylulose 5-phosphate binding site. Glutamate 126 is an NADPH binding site. Position 150 (aspartate 150) interacts with Mn(2+). Positions 151, 152, 186, and 209 each coordinate 1-deoxy-D-xylulose 5-phosphate. Glutamate 152 lines the Mn(2+) pocket. Glycine 215 contacts NADPH. 1-deoxy-D-xylulose 5-phosphate contacts are provided by serine 222, asparagine 227, lysine 228, and glutamate 231. Glutamate 231 serves as a coordination point for Mn(2+).

The protein belongs to the DXR family. Requires Mg(2+) as cofactor. It depends on Mn(2+) as a cofactor.

It carries out the reaction 2-C-methyl-D-erythritol 4-phosphate + NADP(+) = 1-deoxy-D-xylulose 5-phosphate + NADPH + H(+). The protein operates within isoprenoid biosynthesis; isopentenyl diphosphate biosynthesis via DXP pathway; isopentenyl diphosphate from 1-deoxy-D-xylulose 5-phosphate: step 1/6. Its function is as follows. Catalyzes the NADPH-dependent rearrangement and reduction of 1-deoxy-D-xylulose-5-phosphate (DXP) to 2-C-methyl-D-erythritol 4-phosphate (MEP). This is 1-deoxy-D-xylulose 5-phosphate reductoisomerase from Aliivibrio fischeri (strain MJ11) (Vibrio fischeri).